Here is a 765-residue protein sequence, read N- to C-terminus: LPS-assembly protein LptD (765 aa).

Positions 1–18 (MQIRYFLALSLLPQVVLA) are cleaved as a signal peptide.

Belongs to the LptD family. In terms of assembly, component of the lipopolysaccharide transport and assembly complex. Interacts with LptE and LptA.

It localises to the cell outer membrane. In terms of biological role, together with LptE, is involved in the assembly of lipopolysaccharide (LPS) at the surface of the outer membrane. This chain is LPS-assembly protein LptD, found in Shewanella sp. (strain ANA-3).